Reading from the N-terminus, the 201-residue chain is FMN-dependent NADH:quinone oxidoreductase (201 aa).

FMN contacts are provided by residues Ser-9 and 16–18 (SYS).

This sequence belongs to the azoreductase type 1 family. As to quaternary structure, homodimer. It depends on FMN as a cofactor.

It carries out the reaction 2 a quinone + NADH + H(+) = 2 a 1,4-benzosemiquinone + NAD(+). The catalysed reaction is N,N-dimethyl-1,4-phenylenediamine + anthranilate + 2 NAD(+) = 2-(4-dimethylaminophenyl)diazenylbenzoate + 2 NADH + 2 H(+). In terms of biological role, quinone reductase that provides resistance to thiol-specific stress caused by electrophilic quinones. Functionally, also exhibits azoreductase activity. Catalyzes the reductive cleavage of the azo bond in aromatic azo compounds to the corresponding amines. The protein is FMN-dependent NADH:quinone oxidoreductase of Mesomycoplasma hyopneumoniae (strain 232) (Mycoplasma hyopneumoniae).